Reading from the N-terminus, the 496-residue chain is Sodium/sialic acid symporter SiaT (496 aa).

The Periplasmic segment spans residues 1-7 (MQLHDFG). Residues 8 to 29 (FINYAVLFGYLAAMLLVGVYFS) form a helical membrane-spanning segment. The Cytoplasmic portion of the chain corresponds to 30-46 (KRQKTADDYFRGGGRVP). The chain crosses the membrane as a helical span at residues 47–59 (GWAAGVSVFATTL). Alanine 56 contributes to the Na(+) binding site. Threonine 58 contributes to the N-acetyl-alpha-neuraminate binding site. Residue leucine 59 coordinates Na(+). N-acetyl-alpha-neuraminate is bound by residues serine 60, threonine 63, and glutamine 82. Topologically, residues 60 to 76 (SSITFMSIPAKAYTSDW) are periplasmic. The helical transmembrane segment at 77–92 (TFIIGQYLAIAILPLV) threads the bilayer. Residues 93 to 116 (FYFYIPFFRKLKITSAYEYLEARF) are Cytoplasmic-facing. Residues 117-144 (DVRSRLFASLSFMLFHIGRVAIITYLTV) form a helical membrane-spanning segment. Arginine 135 is an N-acetyl-alpha-neuraminate binding site. At 145 to 154 (LALRPFMGID) the chain is on the periplasmic side. A helical transmembrane segment spans residues 155–172 (PVVLIVLISLLCIIYTWM). Residues 173–174 (GG) are Cytoplasmic-facing. Residues 175–199 (IEGVIWTDVIQGLLLSGGAVLIFIM) traverse the membrane as a helical segment. Position 182 (aspartate 182) interacts with Na(+). The Periplasmic portion of the chain corresponds to 200–235 (ICFKVDGGISEIFTTTAQADKFFPTTQWRWSWTDST). The helical transmembrane segment at 236-252 (IPVLMIGFLFANIQQFT) threads the bilayer. The Cytoplasmic segment spans residues 253-272 (ASQDVVQRYIVTDSIKETKR). A helical transmembrane segment spans residues 273–292 (TLITNAKLVAIIPIFFFAIG). Over 293 to 325 (SALFVYYQQNPSLLPAGFNTGGILPLFIVTEMP) the chain is Periplasmic. A helical transmembrane segment spans residues 326–356 (IGIAGLIIAAIFAAAQSSISSSLNSISSCFN). Alanine 339, serine 342, serine 343, serine 345, and serine 346 together coordinate Na(+). Topologically, residues 357–374 (SDIYTRLSKSSPSPEQKM) are cytoplasmic. A helical transmembrane segment spans residues 375–396 (KVAKLVIIVAGIFSSLAAIWLV). The Periplasmic portion of the chain corresponds to 397 to 403 (LSDEAEI). Residues 404–427 (WDAFNSLIGLMGGPMTGLFMLGIF) form a helical membrane-spanning segment. Over 428–432 (VKRAN) the chain is Cytoplasmic. The chain crosses the membrane as a helical span at residues 433 to 453 (AGSAVVGIIVSIIAVLAARYG). The Periplasmic segment spans residues 454–457 (SDLN). The chain crosses the membrane as a helical span at residues 458–479 (FFFYGVIGSMSVVIAGTITAPL). Residues 480–496 (FAPAKQLSLDDSETSEN) lie on the Cytoplasmic side of the membrane.

The protein belongs to the sodium:solute symporter (SSF) (TC 2.A.21) family.

The protein localises to the cell inner membrane. The enzyme catalyses N-acetyl-alpha-neuraminate(out) + 2 Na(+)(out) = N-acetyl-alpha-neuraminate(in) + 2 Na(+)(in). Its activity is regulated as follows. Both Na(+) sites regulate Neu5Ac transport. The binding energy of the second Na(+) ion may be used to allosterically stabilize the substrate without directly coordinating it. In the absence of external Na(+), the rate is reduced by 78%. Its function is as follows. Symporter that uses the Na(+) gradient as the driving force for the uptake of the sialic acid N-acetylneuraminic acid (Neu5Ac). It allows the use of host-derived Neu5Ac as an energy source by P.mirabilis. Also binds N-glycolylneuraminic acid (Neu5Gc) and ketodeoxynonulosonic acid (KDN). Shows the highest affinity for Neu5Ac and Neu5Gc, which commonly occupy the terminal non-reducing position of mammalian cell surface glycoconjugates. This is Sodium/sialic acid symporter SiaT from Proteus mirabilis (strain HI4320).